A 111-amino-acid polypeptide reads, in one-letter code: Putative ciliary rootlet coiled-coil protein-like 1 protein (111 aa).

Positions 21 to 86 (MELELSVTKL…RQAEQEATVA (66 aa)) form a coiled coil.

This sequence belongs to the rootletin family.

This Homo sapiens (Human) protein is Putative ciliary rootlet coiled-coil protein-like 1 protein (CROCCP2).